The chain runs to 82 residues: Putative membrane protein insertion efficiency factor (82 aa).

It belongs to the UPF0161 family.

It is found in the cell membrane. Its function is as follows. Could be involved in insertion of integral membrane proteins into the membrane. The sequence is that of Putative membrane protein insertion efficiency factor from Streptococcus thermophilus (strain ATCC BAA-491 / LMD-9).